A 440-amino-acid polypeptide reads, in one-letter code: Xylose isomerase (440 aa).

Residues histidine 100 and aspartate 103 contribute to the active site. The Mg(2+) site is built by glutamate 231, glutamate 267, histidine 270, aspartate 295, aspartate 306, aspartate 308, and aspartate 338.

It belongs to the xylose isomerase family. In terms of assembly, homotetramer. Requires Mg(2+) as cofactor.

The protein resides in the cytoplasm. It carries out the reaction alpha-D-xylose = alpha-D-xylulofuranose. The protein is Xylose isomerase of Burkholderia thailandensis (strain ATCC 700388 / DSM 13276 / CCUG 48851 / CIP 106301 / E264).